Here is a 97-residue protein sequence, read N- to C-terminus: Large ribosomal subunit protein bL31 (97 aa).

Positions 76–97 (KTPKKAKGKTEEYTKHRSLNEL) are disordered. Positions 83 to 97 (GKTEEYTKHRSLNEL) are enriched in basic and acidic residues.

Belongs to the bacterial ribosomal protein bL31 family. Type A subfamily. In terms of assembly, part of the 50S ribosomal subunit.

In terms of biological role, binds the 23S rRNA. This is Large ribosomal subunit protein bL31 from Mycoplasma pneumoniae (strain ATCC 29342 / M129 / Subtype 1) (Mycoplasmoides pneumoniae).